The following is a 667-amino-acid chain: Long-chain-fatty-acid--CoA ligase ACSBG2 (667 aa).

Residues 227-235, 418-423, Asp496, Arg511, and Arg624 each bind ATP; these read TSGTTGTPK and EIYGMS.

It belongs to the ATP-dependent AMP-binding enzyme family. Bubblegum subfamily. In terms of tissue distribution, testis- and brainstem-specific. Expressed in pubertal and adult testis. Enriched in germ cells and Sertoli cells while present at a lower level in Leydig cells. Present in testicular Sertoli cells and large motoneurons in the medulla oblongata and cervical spinal cord (at protein level).

The protein localises to the cytoplasm. Its subcellular location is the membrane. The enzyme catalyses a long-chain fatty acid + ATP + CoA = a long-chain fatty acyl-CoA + AMP + diphosphate. It carries out the reaction (5Z,8Z,11Z,14Z)-eicosatetraenoate + ATP + CoA = (5Z,8Z,11Z,14Z)-eicosatetraenoyl-CoA + AMP + diphosphate. It catalyses the reaction hexadecanoate + ATP + CoA = hexadecanoyl-CoA + AMP + diphosphate. The catalysed reaction is (9Z)-octadecenoate + ATP + CoA = (9Z)-octadecenoyl-CoA + AMP + diphosphate. The enzyme catalyses (9Z,12Z)-octadecadienoate + ATP + CoA = (9Z,12Z)-octadecadienoyl-CoA + AMP + diphosphate. It carries out the reaction tetracosanoate + ATP + CoA = tetracosanoyl-CoA + AMP + diphosphate. Its function is as follows. Catalyzes the conversion of fatty acids such as long chain and very long-chain fatty acids to their active form acyl-CoAs for both synthesis of cellular lipids, and degradation via beta-oxidation. Can activate diverse saturated, monosaturated and polyunsaturated fatty acids. Has increased ability to activate oleic and linoleic acid. May play a role in spermatogenesis. This chain is Long-chain-fatty-acid--CoA ligase ACSBG2, found in Mus musculus (Mouse).